The chain runs to 358 residues: Phosphoserine aminotransferase (358 aa).

Arginine 41 is a binding site for L-glutamate. Residues 75-76 (AS), tryptophan 100, threonine 148, aspartate 167, and glutamine 190 each bind pyridoxal 5'-phosphate. At lysine 191 the chain carries N6-(pyridoxal phosphate)lysine. Residue 233–234 (NT) participates in pyridoxal 5'-phosphate binding.

It belongs to the class-V pyridoxal-phosphate-dependent aminotransferase family. SerC subfamily. In terms of assembly, homodimer. Pyridoxal 5'-phosphate is required as a cofactor.

Its subcellular location is the cytoplasm. It carries out the reaction O-phospho-L-serine + 2-oxoglutarate = 3-phosphooxypyruvate + L-glutamate. The catalysed reaction is 4-(phosphooxy)-L-threonine + 2-oxoglutarate = (R)-3-hydroxy-2-oxo-4-phosphooxybutanoate + L-glutamate. Its pathway is amino-acid biosynthesis; L-serine biosynthesis; L-serine from 3-phospho-D-glycerate: step 2/3. It participates in cofactor biosynthesis; pyridoxine 5'-phosphate biosynthesis; pyridoxine 5'-phosphate from D-erythrose 4-phosphate: step 3/5. Its function is as follows. Catalyzes the reversible conversion of 3-phosphohydroxypyruvate to phosphoserine and of 3-hydroxy-2-oxo-4-phosphonooxybutanoate to phosphohydroxythreonine. This Campylobacter jejuni (strain RM1221) protein is Phosphoserine aminotransferase.